Here is a 196-residue protein sequence, read N- to C-terminus: Peptidyl-tRNA hydrolase (196 aa).

Tyr-17 contributes to the tRNA binding site. The active-site Proton acceptor is the His-22. Residues Tyr-69, Asn-71, and Asn-117 each coordinate tRNA.

This sequence belongs to the PTH family. As to quaternary structure, monomer.

The protein localises to the cytoplasm. It carries out the reaction an N-acyl-L-alpha-aminoacyl-tRNA + H2O = an N-acyl-L-amino acid + a tRNA + H(+). Functionally, hydrolyzes ribosome-free peptidyl-tRNAs (with 1 or more amino acids incorporated), which drop off the ribosome during protein synthesis, or as a result of ribosome stalling. In terms of biological role, catalyzes the release of premature peptidyl moieties from peptidyl-tRNA molecules trapped in stalled 50S ribosomal subunits, and thus maintains levels of free tRNAs and 50S ribosomes. This is Peptidyl-tRNA hydrolase from Pseudarthrobacter chlorophenolicus (strain ATCC 700700 / DSM 12829 / CIP 107037 / JCM 12360 / KCTC 9906 / NCIMB 13794 / A6) (Arthrobacter chlorophenolicus).